The primary structure comprises 183 residues: Large ribosomal subunit protein uL6 (183 aa).

This sequence belongs to the universal ribosomal protein uL6 family. Part of the 50S ribosomal subunit.

This protein binds to the 23S rRNA, and is important in its secondary structure. It is located near the subunit interface in the base of the L7/L12 stalk, and near the tRNA binding site of the peptidyltransferase center. The protein is Large ribosomal subunit protein uL6 of Porphyromonas gingivalis (strain ATCC 33277 / DSM 20709 / CIP 103683 / JCM 12257 / NCTC 11834 / 2561).